A 258-amino-acid chain; its full sequence is Ribosomal RNA small subunit methyltransferase A (258 aa).

S-adenosyl-L-methionine-binding residues include histidine 9, leucine 11, glycine 36, glutamate 57, aspartate 83, and asparagine 102.

This sequence belongs to the class I-like SAM-binding methyltransferase superfamily. rRNA adenine N(6)-methyltransferase family. RsmA subfamily.

It is found in the cytoplasm. It catalyses the reaction adenosine(1518)/adenosine(1519) in 16S rRNA + 4 S-adenosyl-L-methionine = N(6)-dimethyladenosine(1518)/N(6)-dimethyladenosine(1519) in 16S rRNA + 4 S-adenosyl-L-homocysteine + 4 H(+). In terms of biological role, specifically dimethylates two adjacent adenosines (A1518 and A1519) in the loop of a conserved hairpin near the 3'-end of 16S rRNA in the 30S particle. May play a critical role in biogenesis of 30S subunits. This is Ribosomal RNA small subunit methyltransferase A from Caulobacter vibrioides (strain ATCC 19089 / CIP 103742 / CB 15) (Caulobacter crescentus).